The chain runs to 282 residues: Diaminopimelate epimerase (282 aa).

Asn13, Gln45, and Asn64 together coordinate substrate. Residue Cys73 is the Proton donor of the active site. Residues 74–75, Asn155, Asn189, and 207–208 contribute to the substrate site; these read GN and ER. Catalysis depends on Cys216, which acts as the Proton acceptor. 217-218 serves as a coordination point for substrate; sequence GS.

The protein belongs to the diaminopimelate epimerase family. In terms of assembly, homodimer.

It is found in the cytoplasm. The catalysed reaction is (2S,6S)-2,6-diaminopimelate = meso-2,6-diaminopimelate. It functions in the pathway amino-acid biosynthesis; L-lysine biosynthesis via DAP pathway; DL-2,6-diaminopimelate from LL-2,6-diaminopimelate: step 1/1. Its function is as follows. Catalyzes the stereoinversion of LL-2,6-diaminopimelate (L,L-DAP) to meso-diaminopimelate (meso-DAP), a precursor of L-lysine and an essential component of the bacterial peptidoglycan. In Bartonella bacilliformis (strain ATCC 35685 / KC583 / Herrer 020/F12,63), this protein is Diaminopimelate epimerase.